Reading from the N-terminus, the 90-residue chain is U7-theraphotoxin-Hhn1l (90 aa).

The signal sequence occupies residues 1–19 (MKTAIFTVVLALAVFAVLS). The propeptide occupies 20-50 (FGWEANEKALSEEFTELIHEKEAASETEARE). 3 disulfide bridges follow: Cys-51–Cys-65, Cys-58–Cys-70, and Cys-64–Cys-81.

Belongs to the neurotoxin 10 (Hwtx-1) family. 13 (Hntx-13) subfamily. In terms of tissue distribution, expressed by the venom gland.

The protein localises to the secreted. Ion channel inhibitor. In Cyriopagopus hainanus (Chinese bird spider), this protein is U7-theraphotoxin-Hhn1l.